The chain runs to 212 residues: Probable chemoreceptor glutamine deamidase CheD (212 aa).

This sequence belongs to the CheD family.

It catalyses the reaction L-glutaminyl-[protein] + H2O = L-glutamyl-[protein] + NH4(+). Its function is as follows. Probably deamidates glutamine residues to glutamate on methyl-accepting chemotaxis receptors (MCPs), playing an important role in chemotaxis. The sequence is that of Probable chemoreceptor glutamine deamidase CheD from Bordetella parapertussis (strain 12822 / ATCC BAA-587 / NCTC 13253).